The primary structure comprises 253 residues: Large ribosomal subunit protein uL10m (253 aa).

The transit peptide at 1 to 24 directs the protein to the mitochondrion; the sequence is MANLMQRSLPLTTTRTPVLQFLRF.

Belongs to the universal ribosomal protein uL10 family. As to quaternary structure, component of the mitochondrial ribosome large subunit (39S) which comprises a 16S rRNA and about 50 distinct proteins.

The protein localises to the mitochondrion. The sequence is that of Large ribosomal subunit protein uL10m (mRpL10) from Drosophila pseudoobscura pseudoobscura (Fruit fly).